The sequence spans 382 residues: Galactokinase (382 aa).

Residue 34–37 coordinates substrate; sequence EHTD. Residue 124 to 130 coordinates ATP; sequence GAGLSSS. Serine 130 and glutamate 162 together coordinate Mg(2+). Residue aspartate 174 is the Proton acceptor of the active site. Substrate is bound at residue tyrosine 223.

The protein belongs to the GHMP kinase family. GalK subfamily.

It localises to the cytoplasm. The catalysed reaction is alpha-D-galactose + ATP = alpha-D-galactose 1-phosphate + ADP + H(+). It functions in the pathway carbohydrate metabolism; galactose metabolism. Its function is as follows. Catalyzes the transfer of the gamma-phosphate of ATP to D-galactose to form alpha-D-galactose-1-phosphate (Gal-1-P). The sequence is that of Galactokinase from Salmonella gallinarum (strain 287/91 / NCTC 13346).